A 494-amino-acid polypeptide reads, in one-letter code: V-type proton ATPase subunit B (494 aa).

The protein belongs to the ATPase alpha/beta chains family. V-ATPase is a heteromultimeric enzyme composed of a peripheral catalytic V1 complex (main components: subunits A, B, C, D, E, and F) attached to an integral membrane V0 proton pore complex (main component: the proteolipid protein).

Its function is as follows. Non-catalytic subunit of the peripheral V1 complex of vacuolar ATPase. V-ATPase is responsible for acidifying a variety of intracellular compartments in eukaryotic cells. The protein is V-type proton ATPase subunit B (VAPB) of Plasmodium falciparum.